The chain runs to 316 residues: Protein U25 (316 aa).

It belongs to the herpesviridae US22 family.

This chain is Protein U25 (U25), found in Homo sapiens (Human).